Reading from the N-terminus, the 165-residue chain is Thiol peroxidase (165 aa).

The Thioredoxin domain maps to 18 to 165 (PQVGDNLAEF…DYDAALAALN (148 aa)). The active-site Cysteine sulfenic acid (-SOH) intermediate is the cysteine 60. Cysteine 60 and cysteine 94 are joined by a disulfide.

The protein belongs to the peroxiredoxin family. Tpx subfamily. As to quaternary structure, homodimer.

It catalyses the reaction a hydroperoxide + [thioredoxin]-dithiol = an alcohol + [thioredoxin]-disulfide + H2O. In terms of biological role, thiol-specific peroxidase that catalyzes the reduction of hydrogen peroxide and organic hydroperoxides to water and alcohols, respectively. Plays a role in cell protection against oxidative stress by detoxifying peroxides. This Corynebacterium glutamicum (strain ATCC 13032 / DSM 20300 / JCM 1318 / BCRC 11384 / CCUG 27702 / LMG 3730 / NBRC 12168 / NCIMB 10025 / NRRL B-2784 / 534) protein is Thiol peroxidase.